The sequence spans 2510 residues: Highly reducing polyketide synthase g433 (2510 aa).

Positions 1-54 are disordered; sequence MAPGRTDVTVAENGNGLHTAHNGVSNGTSNGTNGTSHTSNGTNSSAKTTSNGVH. Low complexity predominate over residues 22 to 45; the sequence is NGVSNGTSNGTNGTSHTSNGTNSS. In terms of domain architecture, Ketosynthase family 3 (KS3) spans 58–477; sequence DIPIAIVGMG…GANAHAVIDS (420 aa). Active-site for beta-ketoacyl synthase activity residues include C229, H365, and H400. Residues 574–880 form a malonyl-CoA:ACP transacylase (MAT) domain region; the sequence is FVFTGQGAQW…VPTLVRGQND (307 aa). Positions 942 to 1070 are N-terminal hotdog fold; sequence HDLLGCQVFE…GQVKAGRADS (129 aa). The interval 942-1226 is dehydratase (DH) domain; the sequence is HDLLGCQVFE…NLRLAPAADD (285 aa). Positions 942-1229 constitute a PKS/mFAS DH domain; that stretch reads HDLLGCQVFE…LAPAADDTGG (288 aa). H974 acts as the Proton acceptor; for dehydratase activity in catalysis. Residues 1083–1229 are C-terminal hotdog fold; it reads PRKVSSTRWY…LAPAADDTGG (147 aa). Catalysis depends on D1144, which acts as the Proton donor; for dehydratase activity. A methyltransferase (CMet) domain region spans residues 1395-1574; sequence DFLGLVSHDK…FDGAEAVIYD (180 aa). The enoyl reductase (ER) (ER) domain stretch occupies residues 1787-2097; the sequence is GSLKTLRWVQ…KGQHMGKLVI (311 aa). The segment at 2122–2296 is ketoreductase (KR) domain; the sequence is SYLLVGGLGG…ASVLDISIIE (175 aa). The region spanning 2419–2496 is the Carrier domain; it reads SSVSFLANEI…KLGEAAAEGL (78 aa). S2456 bears the O-(pantetheine 4'-phosphoryl)serine mark.

Its pathway is mycotoxin biosynthesis. Functionally, highly reducing polyketide synthase; part of the gene cluster that mediates the biosynthesis of 1233A, a natural compound known as an inhibitor of HMG-CoA synthase in the mevalonate pathway and with antibacterial and antifungal activities. The highly reducing polyketide synthase g433 gene is responsible for the 1233A backbone biosynthesis and the cytochrome P450 monooxygenase g430 catalyzes oxidation of the backbone. This is Highly reducing polyketide synthase g433 from Fusarium sp.